We begin with the raw amino-acid sequence, 169 residues long: Protein ORFb in retron Ec67 (169 aa).

In Escherichia coli, this protein is Protein ORFb in retron Ec67.